The sequence spans 174 residues: uncharacterized protein (174 aa).

The disordered stretch occupies residues 78–97 (TFGRNIKTPDISNPTRARNE).

The protein to yeast YMR295c.

This is an uncharacterized protein from Saccharomyces cerevisiae (strain ATCC 204508 / S288c) (Baker's yeast).